Here is a 439-residue protein sequence, read N- to C-terminus: Na(+)/H(+) antiporter NhaA 1 (439 aa).

Transmembrane regions (helical) follow at residues 14–34 (ITGG…ANLA), 60–80 (ISLH…FIGL), 98–118 (ALPL…YYFF), 127–147 (GWGI…AMVG), 156–176 (IFLS…IAIF), 179–199 (EQIF…LAVA), 213–233 (IGLI…TIAG), 303–323 (HPIS…GVIV), 335–355 (IVLG…FLFA), 375–395 (IIGT…ISDL), and 408–428 (VAVL…LISA).

It belongs to the NhaA Na(+)/H(+) (TC 2.A.33) antiporter family.

It localises to the cell inner membrane. It catalyses the reaction Na(+)(in) + 2 H(+)(out) = Na(+)(out) + 2 H(+)(in). Its function is as follows. Na(+)/H(+) antiporter that extrudes sodium in exchange for external protons. In Psychromonas ingrahamii (strain DSM 17664 / CCUG 51855 / 37), this protein is Na(+)/H(+) antiporter NhaA 1.